The sequence spans 232 residues: Phosphatidylserine decarboxylase proenzyme (232 aa).

The active-site Schiff-base intermediate with substrate; via pyruvic acid is Ser-190. Ser-190 is subject to Pyruvic acid (Ser); by autocatalysis.

This sequence belongs to the phosphatidylserine decarboxylase family. PSD-A subfamily. As to quaternary structure, heterodimer of a large membrane-associated beta subunit and a small pyruvoyl-containing alpha subunit. It depends on pyruvate as a cofactor. Post-translationally, is synthesized initially as an inactive proenzyme. Formation of the active enzyme involves a self-maturation process in which the active site pyruvoyl group is generated from an internal serine residue via an autocatalytic post-translational modification. Two non-identical subunits are generated from the proenzyme in this reaction, and the pyruvate is formed at the N-terminus of the alpha chain, which is derived from the carboxyl end of the proenzyme. The post-translation cleavage follows an unusual pathway, termed non-hydrolytic serinolysis, in which the side chain hydroxyl group of the serine supplies its oxygen atom to form the C-terminus of the beta chain, while the remainder of the serine residue undergoes an oxidative deamination to produce ammonia and the pyruvoyl prosthetic group on the alpha chain.

The protein resides in the cell membrane. The enzyme catalyses a 1,2-diacyl-sn-glycero-3-phospho-L-serine + H(+) = a 1,2-diacyl-sn-glycero-3-phosphoethanolamine + CO2. It participates in phospholipid metabolism; phosphatidylethanolamine biosynthesis; phosphatidylethanolamine from CDP-diacylglycerol: step 2/2. In terms of biological role, catalyzes the formation of phosphatidylethanolamine (PtdEtn) from phosphatidylserine (PtdSer). The chain is Phosphatidylserine decarboxylase proenzyme from Cereibacter sphaeroides (strain ATCC 17023 / DSM 158 / JCM 6121 / CCUG 31486 / LMG 2827 / NBRC 12203 / NCIMB 8253 / ATH 2.4.1.) (Rhodobacter sphaeroides).